Consider the following 225-residue polypeptide: NAD(P)H-quinone oxidoreductase subunit K, chloroplastic (225 aa).

4 residues coordinate [4Fe-4S] cluster: Cys43, Cys44, Cys108, and Cys139.

This sequence belongs to the complex I 20 kDa subunit family. As to quaternary structure, NDH is composed of at least 16 different subunits, 5 of which are encoded in the nucleus. The cofactor is [4Fe-4S] cluster.

The protein resides in the plastid. It is found in the chloroplast thylakoid membrane. It catalyses the reaction a plastoquinone + NADH + (n+1) H(+)(in) = a plastoquinol + NAD(+) + n H(+)(out). The catalysed reaction is a plastoquinone + NADPH + (n+1) H(+)(in) = a plastoquinol + NADP(+) + n H(+)(out). Functionally, NDH shuttles electrons from NAD(P)H:plastoquinone, via FMN and iron-sulfur (Fe-S) centers, to quinones in the photosynthetic chain and possibly in a chloroplast respiratory chain. The immediate electron acceptor for the enzyme in this species is believed to be plastoquinone. Couples the redox reaction to proton translocation, and thus conserves the redox energy in a proton gradient. This Solanum bulbocastanum (Wild potato) protein is NAD(P)H-quinone oxidoreductase subunit K, chloroplastic.